Here is a 31-residue protein sequence, read N- to C-terminus: Cyclotide mra3 (31 aa).

3 disulfides stabilise this stretch: C5–C21, C9–C23, and C14–C28.

In terms of processing, this is a cyclic peptide. Contains 3 disulfide bonds.

Functionally, probably participates in a plant defense mechanism. The protein is Cyclotide mra3 of Melicytus ramiflorus (Whitey wood).